Consider the following 1225-residue polypeptide: DNA-directed RNA polymerase subunit beta' (1225 aa).

Positions 60, 62, 75, and 78 each coordinate Zn(2+). Mg(2+) is bound by residues Asp-450, Asp-452, and Asp-454. 4 residues coordinate Zn(2+): Cys-818, Cys-892, Cys-899, and Cys-902.

It belongs to the RNA polymerase beta' chain family. In terms of assembly, the RNAP catalytic core consists of 2 alpha, 1 beta, 1 beta' and 1 omega subunit. When a sigma factor is associated with the core the holoenzyme is formed, which can initiate transcription. Requires Mg(2+) as cofactor. Zn(2+) serves as cofactor.

The enzyme catalyses RNA(n) + a ribonucleoside 5'-triphosphate = RNA(n+1) + diphosphate. Functionally, DNA-dependent RNA polymerase catalyzes the transcription of DNA into RNA using the four ribonucleoside triphosphates as substrates. This chain is DNA-directed RNA polymerase subunit beta', found in Streptococcus pneumoniae serotype 19F (strain G54).